A 466-amino-acid polypeptide reads, in one-letter code: Asparagine--tRNA ligase (466 aa).

This sequence belongs to the class-II aminoacyl-tRNA synthetase family. Homodimer.

The protein resides in the cytoplasm. The catalysed reaction is tRNA(Asn) + L-asparagine + ATP = L-asparaginyl-tRNA(Asn) + AMP + diphosphate + H(+). This chain is Asparagine--tRNA ligase, found in Escherichia coli O157:H7.